The primary structure comprises 345 residues: UPF0324 membrane protein Cgl0015/cg0018 (345 aa).

The next 10 membrane-spanning stretches (helical) occupy residues 15 to 37 (LRTGVLQKYTPGLLLCSIAVLIA), 44 to 66 (FSGVSPLIVAIILGIILTNLIQL), 81 to 103 (LLRLGIVFLGLQLVFSDILSLGF), 105 to 124 (MLAVIVCIVAGGIFGTILMG), 134 to 156 (VLLIACGFSICGAAAVAGVEGVT), 163 to 185 (VVTAVALVVIFGTLMIPFIPFAT), 205 to 227 (EIAQVVAAGGVIGGGALGVAVVV), 261 to 280 (VVPLFILGFLAMVVLRSTVA), 285 to 307 (VIAAGGFLQTALLSAAMFGLGCG), and 320 to 342 (PFILAFGSTTLVTSIALAGTLLT).

The protein belongs to the UPF0324 family.

Its subcellular location is the cell membrane. The chain is UPF0324 membrane protein Cgl0015/cg0018 from Corynebacterium glutamicum (strain ATCC 13032 / DSM 20300 / JCM 1318 / BCRC 11384 / CCUG 27702 / LMG 3730 / NBRC 12168 / NCIMB 10025 / NRRL B-2784 / 534).